Reading from the N-terminus, the 380-residue chain is MDFNLNDEQELFVAGIRELMASENWEAYFAECDRDSIYPERFVKALAEMGIDSLLIPEEHGGLDAGFVTVAAVWMELGRLGAPTYVLYQLPGGFNTFLREGTQEQIDKIMAFRGTGKQMWNSAITEPGAGSDVGSLKTTYTRKNGKVYLNGSKCFITSSAYTPYIVVMARDGASPDKPVYTEWFVDMSKPGIKVTKLEKLGLRMDSCCEITFDEVELDEKDRFGREGNGFNRVKEEFDHERFLVALTNYGTAMCAFEDAARYANQRVQFGETIGRFQLIQEKFAHMAIKLNAMKNMLLEAAWKADNGTITSGDAAMCKYFCANAAFEVVDSAMQVLGGVGIAGNHRISRFWRDLRVDRVSGGSDEMQILTLGRAVLKQYR.

This sequence belongs to the acyl-CoA dehydrogenase family. In terms of assembly, homotetramer. It depends on FAD as a cofactor.

It is found in the cytoplasm. The enzyme catalyses 4-(trimethylamino)butanoyl-CoA + oxidized [electron-transfer flavoprotein] + H(+) = crotonobetainyl-CoA + reduced [electron-transfer flavoprotein]. It functions in the pathway amine and polyamine metabolism; carnitine metabolism. Functionally, catalyzes the reduction of crotonobetainyl-CoA to gamma-butyrobetainyl-CoA. The protein is Crotonobetainyl-CoA reductase of Salmonella arizonae (strain ATCC BAA-731 / CDC346-86 / RSK2980).